A 1210-amino-acid polypeptide reads, in one-letter code: Epidermal growth factor receptor (1210 aa).

A signal peptide spans 1–24 (MRPSGTARTTLLVLLTALCAAGGA). Residues 25 to 647 (LEEKKVCQGT…VWPSGPKIPS (623 aa)) are Extracellular-facing. A disulfide bridge connects residues Cys31 and Cys58. An Approximate repeat occupies 75–300 (DLSFLKTIQE…CVKKCPRNYV (226 aa)). N-linked (GlcNAc...) asparagine glycans are attached at residues Asn128, Asn175, and Asn196. 13 disulfide bridges follow: Cys157–Cys187, Cys190–Cys199, Cys194–Cys207, Cys215–Cys223, Cys219–Cys231, Cys232–Cys240, Cys236–Cys248, Cys251–Cys260, Cys264–Cys291, Cys295–Cys307, Cys311–Cys326, Cys329–Cys333, and Cys337–Cys362. Phosphoserine is present on Ser229. N-linked (GlcNAc...) asparagine glycans are attached at residues Asn352, Asn413, and Asn444. The stretch at 390–600 (RELEILKTVK…CVKTCPAGIM (211 aa)) is one Approximate repeat. Intrachain disulfides connect Cys470-Cys499, Cys506-Cys515, Cys510-Cys523, Cys526-Cys535, Cys539-Cys555, Cys558-Cys571, Cys562-Cys579, Cys582-Cys591, Cys595-Cys617, Cys620-Cys628, and Cys624-Cys636. N-linked (GlcNAc...) asparagine glycosylation occurs at Asn528. A glycan (N-linked (GlcNAc...) asparagine) is linked at Asn568. Asn603 and Asn623 each carry an N-linked (GlcNAc...) asparagine glycan. Residues 648-670 (IATGIVGGLLFIVVVALGIGLFM) form a helical membrane-spanning segment. At 671-1210 (RRRHIVRKRT…APPSSEFIGA (540 aa)) the chain is on the cytoplasmic side. Residue Thr680 is modified to Phosphothreonine; by PKC and PKD/PRKD1. The tract at residues 690 to 706 (LVEPLTPSGEAPNQAHL) is important for dimerization, phosphorylation and activation. Thr695 carries the phosphothreonine; by PKD/PRKD1 modification. Position 697 is a phosphoserine (Ser697). Residues 714–981 (FKKIKVLGSG…KMARDPQRYL (268 aa)) form the Protein kinase domain. Residue Lys718 forms a Glycyl lysine isopeptide (Lys-Gly) (interchain with G-Cter in ubiquitin) linkage. 720–728 (LGSGAFGTV) contacts ATP. Lys739 is covalently cross-linked (Glycyl lysine isopeptide (Lys-Gly) (interchain with G-Cter in ubiquitin)). Lys747 provides a ligand contact to ATP. Lys747 bears the N6-(2-hydroxyisobutyryl)lysine mark. Glycyl lysine isopeptide (Lys-Gly) (interchain with G-Cter in ubiquitin) cross-links involve residues Lys756 and Lys759. 792–793 (TQ) provides a ligand contact to ATP. The active-site Proton acceptor is Asp839. Asp857 provides a ligand contact to ATP. A Glycyl lysine isopeptide (Lys-Gly) (interchain with G-Cter in ubiquitin) cross-link involves residue Lys869. Tyr871 carries the post-translational modification Phosphotyrosine. Glycyl lysine isopeptide (Lys-Gly) (interchain with G-Cter in ubiquitin) cross-links involve residues Lys931, Lys962, and Lys972. Phosphoserine is present on residues Ser993 and Ser997. Phosphotyrosine; by autocatalysis occurs at positions 1000 and 1018. 2 positions are modified to phosphoserine: Ser1028 and Ser1041. A Phosphothreonine modification is found at Thr1043. Position 1044 is a phosphoserine (Ser1044). Cys1051 carries S-palmitoyl cysteine lipidation. Position 1069 is a phosphotyrosine (Tyr1069). 2 positions are modified to phosphoserine: Ser1070 and Ser1071. Residues Tyr1092 and Tyr1110 each carry the phosphotyrosine; by autocatalysis modification. The tract at residues 1113–1137 (QPLHPAPGRDLHYQNPHSNAVGNPE) is disordered. Polar residues predominate over residues 1127–1137 (NPHSNAVGNPE). The S-palmitoyl cysteine moiety is linked to residue Cys1146. Ser1166 bears the Phosphoserine mark. Tyr1172 bears the Phosphotyrosine; by autocatalysis mark. At Tyr1197 the chain carries Phosphotyrosine. An Omega-N-methylarginine modification is found at Arg1199.

The protein belongs to the protein kinase superfamily. Tyr protein kinase family. EGF receptor subfamily. As to quaternary structure, binding of the ligand triggers homo- and/or heterodimerization of the receptor triggering its autophosphorylation. Heterodimer with ERBB2. Forms a complex with CCDC88A/GIV (via SH2-like region) and GNAI3 which leads to enhanced EGFR signaling and triggering of cell migration; binding of CCDC88A requires autophosphorylation of the EGFR C-terminal region, and ligand stimulation is required for recruitment of GNAI3 to the complex. Interacts with ERRFI1; inhibits dimerization of the kinase domain and autophosphorylation. Part of a complex with ERBB2 and either PIK3C2A or PIK3C2B. Interacts with GRB2; an adapter protein coupling the receptor to downstream signaling pathways. Interacts with GAB2; involved in signaling downstream of EGFR. Interacts with STAT3; mediates EGFR downstream signaling in cell proliferation. Interacts with RIPK1; involved in NF-kappa-B activation. Interacts (autophosphorylated) with CBL, CBLB and CBLC; involved in EGFR ubiquitination and regulation; interaction with CBL is reduced in the presence of tensin TNS4. Interacts with SOCS5; regulates EGFR degradation through ELOC- and ELOB-mediated ubiquitination and proteasomal degradation. Interacts with PRMT5; methylates EGFR and enhances interaction with PTPN6. Interacts (phosphorylated) with PTPN6; inhibits EGFR-dependent activation of MAPK/ERK. Interacts with COPG1; essential for regulation of EGF-dependent nuclear transport of EGFR by retrograde trafficking from the Golgi to the ER. Interacts with TNK2; this interaction is dependent on EGF stimulation and kinase activity of EGFR. Interacts with PCNA; positively regulates PCNA. Interacts with PELP1. Interacts with MUC1. Interacts with AP2M1. Interacts with FER. Interacts (via SH2 domains) with GRB2, NCK1 and NCK2. Interacts with EPS8; mediates EPS8 phosphorylation. Interacts with ATXN2. Interacts with GAREM1. Interacts (ubiquitinated) with ANKRD13A/B/D; the interaction is direct and may regulate EGFR internalization after EGF stimulation. Interacts with GPER1; the interaction occurs in an estrogen-dependent manner. Interacts (via C-terminal cytoplasmic kinase domain) with ZPR1 (via zinc fingers). Interacts with RNF115 and RNF126. Interacts with GPRC5A (via its transmembrane domain). Interacts with FAM83B; positively regulates EGFR inducing its autophosphorylation in absence of stimulation by EGF. Interacts with LAPTM4B; positively correlates with EGFR activation. Interacts with STX19. Interacts with CD44. Interacts with PGRMC1; the interaction requires PGRMC1 homodimerization. Interacts with PIKFYVE. Interacts with NEU3. Interacts with TRAF4. Interacts with the ant venom OMEGA-myrmeciitoxin(02)-Mg1a. Interacts with CD82; this interaction facilitates ligand-induced endocytosis of the receptor and its subsequent desensitization. Post-translationally, monoubiquitinated and polyubiquitinated upon EGF stimulation; which does not affect tyrosine kinase activity or signaling capacity but may play a role in lysosomal targeting. Polyubiquitin linkage is mainly through 'Lys-63', but linkage through 'Lys-48', 'Lys-11' and 'Lys-29' also occurs. Deubiquitinated by OTUD7B, preventing degradation. Ubiquitinated by RNF115 and RNF126. Ubiquitinated by ZNRF1 or CBL at different lysines in response to EGF stimulation; leading to recruitment of the ESCRT machinery and subsequent degradation in the lysosomes. Deubiquitinated by UCHL1 leading to the inhibition of its degradation. Phosphorylated on Tyr residues in response to EGF. Phosphorylation at Ser-697 is partial and occurs only if Thr-695 is phosphorylated. Phosphorylation at Thr-680 and Thr-695 by PRKD1 inhibits EGF-induced MAPK8/JNK1 activation. Dephosphorylation by PTPRJ prevents endocytosis and stabilizes the receptor at the plasma membrane. Autophosphorylation at Tyr-1199 is stimulated by methylation at Arg-1199 and enhances interaction with PTPN6. Autophosphorylation at Tyr-1092 and/or Tyr-1110 recruits STAT3. Dephosphorylated by PTPN1 and PTPN2. In terms of processing, palmitoylated on Cys residues by ZDHHC20. Palmitoylation inhibits internalization after ligand binding, and increases the persistence of tyrosine-phosphorylated EGFR at the cell membrane. Palmitoylation increases the amplitude and duration of EGFR signaling. Post-translationally, methylated. Methylation at Arg-1199 by PRMT5 stimulates phosphorylation at Tyr-1197.

The protein localises to the cell membrane. It localises to the endoplasmic reticulum membrane. Its subcellular location is the golgi apparatus membrane. The protein resides in the nucleus membrane. It is found in the endosome. The protein localises to the endosome membrane. It localises to the nucleus. The catalysed reaction is L-tyrosyl-[protein] + ATP = O-phospho-L-tyrosyl-[protein] + ADP + H(+). With respect to regulation, endocytosis and inhibition of the activated EGFR by phosphatases like PTPRJ and PTPRK constitute immediate regulatory mechanisms. Upon EGF-binding phosphorylates EPS15 that regulates EGFR endocytosis and activity. Moreover, inducible feedback inhibitors including LRIG1, SOCS4, SOCS5 and ERRFI1 constitute alternative regulatory mechanisms for the EGFR signaling. Functionally, receptor tyrosine kinase binding ligands of the EGF family and activating several signaling cascades to convert extracellular cues into appropriate cellular responses. Known ligands include EGF, TGFA/TGF-alpha, AREG, epigen/EPGN, BTC/betacellulin, epiregulin/EREG and HBEGF/heparin-binding EGF. Ligand binding triggers receptor homo- and/or heterodimerization and autophosphorylation on key cytoplasmic residues. The phosphorylated receptor recruits adapter proteins like GRB2 which in turn activates complex downstream signaling cascades. Activates at least 4 major downstream signaling cascades including the RAS-RAF-MEK-ERK, PI3 kinase-AKT, PLCgamma-PKC and STATs modules. May also activate the NF-kappa-B signaling cascade. Also directly phosphorylates other proteins like RGS16, activating its GTPase activity and probably coupling the EGF receptor signaling to the G protein-coupled receptor signaling. Also phosphorylates MUC1 and increases its interaction with SRC and CTNNB1/beta-catenin. Positively regulates cell migration via interaction with CCDC88A/GIV which retains EGFR at the cell membrane following ligand stimulation, promoting EGFR signaling which triggers cell migration. Plays a role in enhancing learning and memory performance. Plays a role in mammalian pain signaling (long-lasting hypersensitivity). The sequence is that of Epidermal growth factor receptor from Mus musculus (Mouse).